The following is a 42-amino-acid chain: Osteocalcin (42 aa).

The Gla domain occupies Tyr1–Gly40. Pro9 is subject to 4-hydroxyproline. Ca(2+) contacts are provided by Glu17, Glu21, and Asp23. 4-carboxyglutamate is present on residues Glu17 and Glu21.

This sequence belongs to the osteocalcin/matrix Gla protein family. In terms of processing, gamma-carboxyglutamic acid residues are formed by vitamin K dependent carboxylation. These residues are essential for the binding of calcium.

The protein resides in the secreted. The carboxylated form is one of the main organic components of the bone matrix, which constitutes 1-2% of the total bone protein: it acts as a negative regulator of bone formation and is required to limit bone formation without impairing bone resorption or mineralization. The carboxylated form binds strongly to apatite and calcium. Its function is as follows. The uncarboxylated form acts as a hormone secreted by osteoblasts, which regulates different cellular processes, such as energy metabolism, male fertility and brain development. Regulates of energy metabolism by acting as a hormone favoring pancreatic beta-cell proliferation, insulin secretion and sensitivity and energy expenditure. Uncarboxylated osteocalcin hormone also promotes testosterone production in the testes: acts as a ligand for G protein-coupled receptor GPRC6A at the surface of Leydig cells, initiating a signaling response that promotes the expression of enzymes required for testosterone synthesis in a CREB-dependent manner. Also acts as a regulator of brain development: osteocalcin hormone crosses the blood-brain barrier and acts as a ligand for GPR158 on neurons, initiating a signaling response that prevents neuronal apoptosis in the hippocampus, favors the synthesis of all monoamine neurotransmitters and inhibits that of gamma-aminobutyric acid (GABA). Osteocalcin also crosses the placenta during pregnancy and maternal osteocalcin is required for fetal brain development. The chain is Osteocalcin from Camelops hesternus (Western camel).